Consider the following 399-residue polypeptide: Proteinase-activated receptor 2 (399 aa).

The N-terminal stretch at 1 to 25 is a signal peptide; it reads MRSLSLAWLLGGITLLAASVSCSRT. The propeptide at 26-38 is removed for receptor activation; sequence ENLAPGRNNSKGR. N-linked (GlcNAc...) asparagine glycosylation is present at Asn-33. Topologically, residues 39–73 are extracellular; that stretch reads SLIGRLETQPPITGKGVPVEPGFSIDEFSASILTG. A helical transmembrane segment spans residues 74 to 103; that stretch reads KLTTVFLPVVYIIVFVIGLPSNGMALWIFL. Residues 104–110 lie on the Cytoplasmic side of the membrane; the sequence is FRTKKKH. A helical membrane pass occupies residues 111-139; it reads PAVIYMANLALADLLSVIWFPLKISYHLH. Residues 140-151 lie on the Extracellular side of the membrane; that stretch reads GNNWVYGEALCK. Cys-150 and Cys-228 are oxidised to a cystine. Residues 152–179 form a helical membrane-spanning segment; the sequence is VLIGFFYGNMYCSILFMTCLSVQRYWVI. Residues 180–185 are Cytoplasmic-facing; the sequence is VNPMGH. The helical transmembrane segment at 186-213 threads the bilayer; sequence PRKKANIAVGVSLAIWLLIFLVTIPLYV. The Extracellular segment spans residues 214–237; sequence MKQTIYIPALNITTCHDVLPEEVL. N-linked (GlcNAc...) asparagine glycosylation is present at Asn-224. Residues 238 to 271 traverse the membrane as a helical segment; that stretch reads VGDMFNYFLSLAIGVFLFPALLTASAYVLMIKTL. At 272 to 279 the chain is on the cytoplasmic side; it reads RSSAMDEH. The helical transmembrane segment at 280 to 319 threads the bilayer; that stretch reads SEKKRQRAIRLIITVLAMYFICFAPSNLLLVVHYFLIKTQ. The Extracellular portion of the chain corresponds to 320 to 325; the sequence is RQSHVY. A helical membrane pass occupies residues 326-349; the sequence is ALYLVALCLSTLNSCIDPFVYYFV. At 350–399 the chain is on the cytoplasmic side; it reads SKDFRDHARNALLCRSVRTVNRMQISLSSNKFSRKSGSYSSSSTSVKTSY. The S-palmitoyl cysteine moiety is linked to residue Cys-363.

Belongs to the G-protein coupled receptor 1 family. As to quaternary structure, interacts with TLR4, COPS5 and TMED2. Interacts with GNAQ, GNA11, GNA12, GNA13 and GNA14. In terms of processing, a proteolytic cleavage generates a new N-terminus that functions as a tethered ligand. Activating serine proteases include trypsin, mast cell tryptase, coagulation factors VII and Xa, myeloblastin/PRTN3 and membrane-type serine protease 1/ST14. Proposed subsequent cleavage by serine proteases is leading to receptor deactivation and include neutrophil elastase and cathepsin G. At least in part, implicated proteases are also shown to activate the receptor; the glycosylation status of the receptor is thought to contribute to the difference. N-glycosylated and sialylated. Post-translationally, multiple phosphorylated on serine and threonine residues in the cytoplasmic region upon receptor activation; required for receptor desensitization and recruitment of beta-arrestin. In terms of processing, monoubiquitinated by Cbl at the plasma membrane and in early endosomes; not required for receptor endocytosis but for translocation to late endosomes or lysosomes. Deubiquitination involves Stambp and Usp8; required for lysosomal trafficking and receptor degradation.

The protein localises to the cell membrane. Its function is as follows. Receptor for trypsin and trypsin-like enzymes coupled to G proteins. Its function is mediated through the activation of several signaling pathways including phospholipase C (PLC), intracellular calcium, mitogen-activated protein kinase (MAPK), I-kappaB kinase/NF-kappaB and Rho. Can also be transactivated by cleaved F2r/Par1. Involved in modulation of inflammatory responses and regulation of innate and adaptive immunity, and acts as a sensor for proteolytic enzymes generated during infection. Generally is promoting inflammation. Can signal synergistically with Tlr4 and probably Tlr2 in inflammatory responses and modulates Tlr3 signaling. Has a protective role in establishing the endothelial barrier; the activity involves coagulation factor X. Regulates endothelial cell barrier integrity during neutrophil extravasation, probably following proteolytic cleavage by PRTN3. Proposed to have a bronchoprotective role in airway epithelium, but also shown to compromise the airway epithelial barrier by interrupting E-cadherin adhesion. Involved in the regulation of vascular tone; activation results in hypotension presumably mediated by vasodilation. Associates with a subset of G proteins alpha subunits such as GNAQ, GNA11, GNA14, GNA12 and GNA13, but probably not with G(o)-alpha, G(i) subunit alpha-1 and G(i) subunit alpha-2. Believed to be a class B receptor which internalizes as a complex with arrestin and traffic with it to endosomal vesicles, presumably as desensitized receptor, for extended periods of time. Mediates inhibition of TNF-alpha stimulated JNK phosphorylation via coupling to GNAQ and GNA11; the function involves dissociation of Ripk1 and Tradd from Tnfr1. Mediates phosphorylation of nuclear factor NF-kappa-B RELA subunit at 'Ser-536'; the function involves Ikbkb and is predominantly independent of G proteins. Involved in cellular migration. Involved in cytoskeletal rearrangement and chemotaxis through beta-arrestin-promoted scaffolds; the function is independent of GNAQ and GNA11 and involves promotion of cofilin dephosphorylation and actin filament severing. Induces redistribution of Cops5 from the plasma membrane to the cytosol and activation of the JNK cascade is mediated by Cops5. Involved in the recruitment of leukocytes to the sites of inflammation and is the major PAR receptor capable of modulating eosinophil function such as pro-inflammatory cytokine secretion, superoxide production and degranulation. During inflammation promotes dendritic cell maturation, trafficking to the lymph nodes and subsequent T-cell activation. Involved in antimicrobial response of innate immune cells; activation enhances phagocytosis of Gram-positive and killing of Gram-negative bacteria. Acts synergistically with interferon-gamma in enhancing antiviral responses. Mediates activation of pro-inflammatory and pro-fibrotic responses in fibroblasts, triggered by coagulation factor Xa (F10). Probably mediates activation of barrier protective signaling responses in endothelial cells, triggered by coagulation factor Xa (F10). This Mus musculus (Mouse) protein is Proteinase-activated receptor 2 (F2rl1).